A 164-amino-acid polypeptide reads, in one-letter code: Large ribosomal subunit protein eL24 (164 aa).

Disordered stretches follow at residues K63–S82 and E117–A164. Residues K71–Y81 are compositionally biased toward basic residues. The span at E117–V133 shows a compositional bias: basic and acidic residues.

The protein belongs to the eukaryotic ribosomal protein eL24 family.

It is found in the cytoplasm. This chain is Large ribosomal subunit protein eL24 (RPL24), found in Cicer arietinum (Chickpea).